Consider the following 432-residue polypeptide: Transcriptional adapter 3-B (432 aa).

Disordered regions lie at residues 90 to 124 (HELG…PKSR) and 275 to 315 (SPVE…KSLE). A compositionally biased stretch (polar residues) spans 293–305 (DGASTSPRSQNKP). The stretch at 335-398 (ADDSEDEVLA…NEVMDAFRKI (64 aa)) forms a coiled coil.

It belongs to the NGG1 family.

It localises to the nucleus. Its function is as follows. Functions as a component of the PCAF complex. The PCAF complex is capable of efficiently acetylating histones in a nucleosomal context. This Xenopus laevis (African clawed frog) protein is Transcriptional adapter 3-B (tada3-b).